The primary structure comprises 475 residues: Aspartyl/glutamyl-tRNA(Asn/Gln) amidotransferase subunit B (475 aa).

The protein belongs to the GatB/GatE family. GatB subfamily. In terms of assembly, heterotrimer of A, B and C subunits.

The enzyme catalyses L-glutamyl-tRNA(Gln) + L-glutamine + ATP + H2O = L-glutaminyl-tRNA(Gln) + L-glutamate + ADP + phosphate + H(+). It catalyses the reaction L-aspartyl-tRNA(Asn) + L-glutamine + ATP + H2O = L-asparaginyl-tRNA(Asn) + L-glutamate + ADP + phosphate + 2 H(+). In terms of biological role, allows the formation of correctly charged Asn-tRNA(Asn) or Gln-tRNA(Gln) through the transamidation of misacylated Asp-tRNA(Asn) or Glu-tRNA(Gln) in organisms which lack either or both of asparaginyl-tRNA or glutaminyl-tRNA synthetases. The reaction takes place in the presence of glutamine and ATP through an activated phospho-Asp-tRNA(Asn) or phospho-Glu-tRNA(Gln). The polypeptide is Aspartyl/glutamyl-tRNA(Asn/Gln) amidotransferase subunit B (Staphylococcus carnosus (strain TM300)).